The following is a 254-amino-acid chain: VVTITLNLANPSKGQYSSFVDRIRNNVRDPKLKYGGTDIAVIGAPPTREKYLRINLQGPRGTVSLGLRRENLYVVAYLAMDNTNTNKAYYFRNQITSAELRTVFPEATAANQIVIQYGEDYQSIERNAQITQGSQSRKELGLGIDLLVTSIDGVNRKARVVRNEARFLLIAIQMTAEAARFRYIQNLVTFNFPKKFDSDNKVIQFEVSWGKISRAIYGDCKNGVFNKDYDFGFGKVRQAKQLQMGLLMYLGRPG.

This sequence belongs to the ribosome-inactivating protein family. Type 1 RIP subfamily. Expressed in seeds; most abundant in the perisperm.

The enzyme catalyses Endohydrolysis of the N-glycosidic bond at one specific adenosine on the 28S rRNA.. Its function is as follows. Exhibits N-glycosylase activity. Catalyzes the release of one adenine from a ribosome. Acts as a ribosome-inactivating protein and inhibits protein synthesis in a rabbit-reticulocyte lysate system and in various cell lines (in vitro). Induces cell death in Huh-7 liver cells. May contribute to the protection against plant pests and predators or play a role in regulating the death of plant cells. The polypeptide is rRNA N-glycosylase sapovaccarin-S1 (Gypsophila vaccaria (Cow soapwort)).